Reading from the N-terminus, the 419-residue chain is L-rhamnose isomerase (419 aa).

Mn(2+) contacts are provided by histidine 262, aspartate 294, and aspartate 296.

The protein belongs to the rhamnose isomerase family. In terms of assembly, homotetramer. It depends on Mn(2+) as a cofactor.

The protein resides in the cytoplasm. It carries out the reaction L-rhamnopyranose = L-rhamnulose. The protein operates within carbohydrate degradation; L-rhamnose degradation; glycerone phosphate from L-rhamnose: step 1/3. Its function is as follows. Catalyzes the interconversion of L-rhamnose and L-rhamnulose. This is L-rhamnose isomerase from Escherichia coli O81 (strain ED1a).